The primary structure comprises 291 residues: ATP synthase gamma chain (291 aa).

It belongs to the ATPase gamma chain family. In terms of assembly, F-type ATPases have 2 components, CF(1) - the catalytic core - and CF(0) - the membrane proton channel. CF(1) has five subunits: alpha(3), beta(3), gamma(1), delta(1), epsilon(1). CF(0) has three main subunits: a, b and c.

The protein localises to the cell inner membrane. Functionally, produces ATP from ADP in the presence of a proton gradient across the membrane. The gamma chain is believed to be important in regulating ATPase activity and the flow of protons through the CF(0) complex. In Xanthobacter autotrophicus (strain ATCC BAA-1158 / Py2), this protein is ATP synthase gamma chain.